A 510-amino-acid polypeptide reads, in one-letter code: MTATPKPLVLIILDGFGHSESHKGNAILAAKMPVMDRLYQTMPNGLISGSGMDVGLPDGQMGNSEVGHMNLGAGRVVYQDFTRVTKAIRDGEFFENPTICAAVDKAVSAGKAVHIMGLLSDGGVHSHQDHLVAMAELAVKRGAEKIYLHAFLDGRDTPPRSAKKSLELMDATFARLGKGRTATIVGRYFAMDRDNRWDRVSSAYNLIVDSTADFHADSAVAGLEAAYARDENDEFVKATRIGEAARVEDGDAVVFMNFRADRARELTRVFVEDDFKDFERARQPKVNYVMLTQYAASIPAPSAFAAGSLKNVLGEYLADNGKTQLRIAETEKYAHVTFFFSGGREEPFPGEERILIPSPKVATYDLQPEMSAPEVTDKIVDAIEHQRYDVIVVNYANGDMVGHSGIMEAAIKAVECLDVCVGRIAEALEKVGGEALITADHGNVEQMTDDSTGQAHTAHTSEPVPFVYVGKRQLKVRQGGVLADVAPTMLHLLGMEKPQEMTGHSILVAE.

Positions 14 and 64 each coordinate Mn(2+). The Phosphoserine intermediate role is filled by Ser64. Substrate is bound by residues His125, 155–156 (RD), Arg187, Arg193, 259–262 (RADR), and Lys332. Residues Asp399, His403, Asp440, His441, and His459 each coordinate Mn(2+).

It belongs to the BPG-independent phosphoglycerate mutase family. Monomer. The cofactor is Mn(2+).

The enzyme catalyses (2R)-2-phosphoglycerate = (2R)-3-phosphoglycerate. It participates in carbohydrate degradation; glycolysis; pyruvate from D-glyceraldehyde 3-phosphate: step 3/5. In terms of biological role, catalyzes the interconversion of 2-phosphoglycerate and 3-phosphoglycerate. The polypeptide is 2,3-bisphosphoglycerate-independent phosphoglycerate mutase (Pseudomonas syringae pv. syringae (strain B728a)).